The following is a 92-amino-acid chain: Small ribosomal subunit protein uS19 (92 aa).

Belongs to the universal ribosomal protein uS19 family.

In terms of biological role, protein S19 forms a complex with S13 that binds strongly to the 16S ribosomal RNA. This Nitrobacter hamburgensis (strain DSM 10229 / NCIMB 13809 / X14) protein is Small ribosomal subunit protein uS19.